Consider the following 172-residue polypeptide: 16S rRNA aminocarboxypropyltransferase (172 aa).

S-adenosyl-L-methionine-binding residues include threonine 21, leucine 71, leucine 93, and threonine 112.

It belongs to the TDD superfamily. TSR3 family.

The protein resides in the cytoplasm. The enzyme catalyses an N(1)-methylpseudouridine in rRNA + S-adenosyl-L-methionine = N(1)-methyl-N(3)-[(3S)-3-amino-3-carboxypropyl]pseudouridine in rRNA + S-methyl-5'-thioadenosine + H(+). Its function is as follows. Aminocarboxypropyltransferase that catalyzes the aminocarboxypropyl transfer on pseudouridine at position 914 in 16S rRNA. It constitutes the last step in biosynthesis of the hypermodified N1-methyl-N3-(3-amino-3-carboxypropyl) pseudouridine (m1acp3-Psi). The protein is 16S rRNA aminocarboxypropyltransferase of Methanocaldococcus jannaschii (strain ATCC 43067 / DSM 2661 / JAL-1 / JCM 10045 / NBRC 100440) (Methanococcus jannaschii).